The primary structure comprises 252 residues: GPI alpha-1,4-mannosyltransferase I, stabilizing subunit (252 aa).

The signal sequence occupies residues 1–22 (MAASALAWLLLWAAGLVGRLAA). N97 and N209 each carry an N-linked (GlcNAc...) asparagine glycan. The chain crosses the membrane as a helical span at residues 225–245 (VCSVTLLITVLCSTLILLAVF).

It belongs to the PIGX family. In terms of assembly, part of the glycosylphosphatidylinositol-mannosyltransferase I complex that is composed of PIGM and PIGX. Interacts with PIGM; PIGX stabilizes PIGM.

Its subcellular location is the endoplasmic reticulum membrane. It participates in glycolipid biosynthesis; glycosylphosphatidylinositol-anchor biosynthesis. Stabilizing subunit of the glycosylphosphatidylinositol-mannosyltransferase I complex which catalyzes the transfer of the first mannose, via an alpha-1,4 bond from a dolichol-phosphate-mannose (Dol-P-Man) to the glucosaminyl acyl phosphatidylinositol (GlcN-(acyl)PI) intermediate to generate alpha-D-Man-(1-&gt;4)-alpha-D-GlcN-(1-&gt;6)-(1-radyl,2-acyl-sn-glycero-3-phospho)-2-acyl-inositol and participates in the sixth step of the glycosylphosphatidylinositol-anchor biosynthesis. Probably acts by stabilizing the mannosyltransferase PIGM. This Rattus norvegicus (Rat) protein is GPI alpha-1,4-mannosyltransferase I, stabilizing subunit.